Here is a 469-residue protein sequence, read N- to C-terminus: Soluble pyridine nucleotide transhydrogenase (469 aa).

Glu39–Cys48 contacts FAD.

Belongs to the class-I pyridine nucleotide-disulfide oxidoreductase family. It depends on FAD as a cofactor.

It localises to the cytoplasm. The enzyme catalyses NAD(+) + NADPH = NADH + NADP(+). Conversion of NADPH, generated by peripheral catabolic pathways, to NADH, which can enter the respiratory chain for energy generation. This is Soluble pyridine nucleotide transhydrogenase from Photobacterium profundum (strain SS9).